We begin with the raw amino-acid sequence, 335 residues long: Fructose-1,6-bisphosphatase class 1 (335 aa).

4 residues coordinate Mg(2+): glutamate 92, aspartate 114, leucine 116, and aspartate 117. Residues 117–120 (DGSS), asparagine 209, and lysine 275 contribute to the substrate site. Glutamate 281 lines the Mg(2+) pocket.

It belongs to the FBPase class 1 family. As to quaternary structure, homotetramer. Requires Mg(2+) as cofactor.

It is found in the cytoplasm. The enzyme catalyses beta-D-fructose 1,6-bisphosphate + H2O = beta-D-fructose 6-phosphate + phosphate. The protein operates within carbohydrate biosynthesis; gluconeogenesis. The polypeptide is Fructose-1,6-bisphosphatase class 1 (Paracidovorax citrulli (strain AAC00-1) (Acidovorax citrulli)).